The chain runs to 413 residues: CinA-like protein (413 aa).

Belongs to the CinA family.

This is CinA-like protein from Geobacter metallireducens (strain ATCC 53774 / DSM 7210 / GS-15).